Reading from the N-terminus, the 352-residue chain is B1 bradykinin receptor (352 aa).

Over 1 to 41 (MAAQTLLELQPSNQSQLSALNTTSCDNAREAWDLLYQVLPI) the chain is Extracellular. Asn-13 and Asn-21 each carry an N-linked (GlcNAc...) asparagine glycan. A helical membrane pass occupies residues 42–62 (FILTICAFGLLGNLFVLSVFL). Residues 63-72 (LLRRRLTVAE) lie on the Cytoplasmic side of the membrane. The helical transmembrane segment at 73–93 (IYLVNLAASDLVFVLGLPFWA) threads the bilayer. Residues 94 to 110 (QNIWNQFNWPFGDLLCR) lie on the Extracellular side of the membrane. Residues Cys-109 and Cys-188 are joined by a disulfide bond. A helical transmembrane segment spans residues 111 to 131 (VVNGVIKANLFISIFLMVAIS). At 132 to 153 (QDRYCVLVHPMASRRRRRRRRA) the chain is on the cytoplasmic side. Residues 154–174 (RATCMVIWAVGALLSTPTFLL) form a helical membrane-spanning segment. The Extracellular segment spans residues 175-206 (RSVSAVQDLNISACILLLPHQAWHVARIVELN). The N-linked (GlcNAc...) asparagine glycan is linked to Asn-184. A helical membrane pass occupies residues 207–227 (VLGFLLPLAAIIFFNGHILAS). Residues 228 to 250 (LRGQGEVSQTRIGGPKDCKTTVL) lie on the Cytoplasmic side of the membrane. A helical transmembrane segment spans residues 251–271 (ILTLVAAFLVCWAPYHCFAFL). Residues 272 to 294 (EFLFQVRAVRGCFWEDFIDLGLQ) lie on the Extracellular side of the membrane. The chain crosses the membrane as a helical span at residues 295 to 315 (LANFFAFTNSCLNPVIYVFVG). The Cytoplasmic portion of the chain corresponds to 316 to 326 (RLFRTKVWELY). The S-palmitoyl cysteine moiety is linked to residue Cys-329.

This sequence belongs to the G-protein coupled receptor 1 family. Bradykinin receptor subfamily. BDKRB1 sub-subfamily.

It is found in the cell membrane. Its function is as follows. This is a receptor for bradykinin. Could be a factor in chronic pain and inflammation. This Tupaia minor (Pigmy tree shrew) protein is B1 bradykinin receptor (BDKRB1).